The chain runs to 1341 residues: Subtilisin-like protease 2 (1341 aa).

The signal sequence occupies residues 1–18 (MLNIIYVVSLILIKFIFY). Positions 19–686 (KECNNNNNYY…KLYNNKYSFL (668 aa)) are cleaved as a propeptide — inhibition peptide. Disordered stretches follow at residues 85-107 (EKKTKGEENEIEKKKENDLEKKK) and 143-171 (ADVSNNDNSGHEENNKHKLNKKNSSNYKN). Residues asparagine 165, asparagine 343, asparagine 449, asparagine 453, and asparagine 492 are each glycosylated (N-linked (GlcNAc...) asparagine). The segment at 415–474 (KKSKKEKENTQQKGGNNPNVDINILNNNNNNNNNNNSNNNSNSMNDEEINYNNNNNNKES) is disordered. Low complexity predominate over residues 430 to 474 (NNPNVDINILNNNNNNNNNNNSNNNSNSMNDEEINYNNNNNNKES). A disordered region spans residues 499–530 (IYHNKNDNSYKNKKEGTGKNNDNNDPNNNNNK). Over residues 502-515 (NKNDNSYKNKKEGT) the composition is skewed to basic and acidic residues. Positions 517 to 530 (KNNDNNDPNNNNNK) are enriched in low complexity. Residues asparagine 550, asparagine 641, and asparagine 728 are each glycosylated (N-linked (GlcNAc...) asparagine). The Extracellular portion of the chain corresponds to 687–1136 (NKFLNIEPLI…LYNLYEYDSH (450 aa)). The region spanning 726–1019 (TWNLSIIRVF…DSLVNAEGAV (294 aa)) is the Peptidase S8 domain. Residues aspartate 754 and histidine 797 each act as charge relay system in the active site. Asparagine 820, asparagine 856, asparagine 892, and asparagine 950 each carry an N-linked (GlcNAc...) asparagine glycan. Serine 960 acts as the Charge relay system in catalysis. N-linked (GlcNAc...) asparagine glycans are attached at residues asparagine 1009 and asparagine 1105. Residues 1137–1157 (YLLASVILFFLALLSIFVGMI) form a helical membrane-spanning segment. The Cytoplasmic segment spans residues 1158–1341 (YMKSRKHSDK…MNQLDDMFMK (184 aa)).

The protein belongs to the peptidase S8 family. Post-translationally, proteolytically cleaved at the N-terminus to generate a 74kDa intermediate which is further processed into a 72kDa form. The first maturation cleavage is autocatalytic, occurs in the ER and is necessary for the subsequent SUB2 trafficking to the microneme. The second cleavage may be mediated by PMX/plasmepsin X.

Its subcellular location is the cell membrane. The protein localises to the cytoplasmic vesicle. It localises to the secretory vesicle. The protein resides in the microneme membrane. The catalysed reaction is Hydrolysis of proteins with broad specificity for peptide bonds, and a preference for a large uncharged residue in P1. Hydrolyzes peptide amides.. Its activity is regulated as follows. Activation may be calcium-dependent. Inhibited by the non-covalent interaction with the cleaved propeptide. Its function is as follows. Serine protease which plays an essential role in the shedding of AMA1, MSP1 and MSP7 from the surface of the invading merozoite; this step is essential for productive invasion and the release of the adhesion between the erythrocyte and the merozoite. May cleave TRAMP/PTTRAMP, thereby shedding TRAMP from the merozoite surface during erythrocyte invasion. This is Subtilisin-like protease 2 from Plasmodium falciparum (isolate 3D7).